A 1026-amino-acid chain; its full sequence is Contactin-4 (1026 aa).

Residues Met-1–Ala-18 form the signal peptide. Ig-like C2-type domains follow at residues Pro-32 to Gln-117, Glu-122 to Leu-206, Pro-225 to Thr-311, Pro-316 to Ser-400, Pro-406 to Val-493, and Pro-497 to Ser-586. Intrachain disulfides connect Cys-50/Cys-100, Cys-144/Cys-194, Cys-247/Cys-295, Cys-337/Cys-384, Cys-429/Cys-477, and Cys-519/Cys-576. N-linked (GlcNAc...) asparagine glycosylation is found at Asn-65, Asn-90, and Asn-191. N-linked (GlcNAc...) asparagine glycosylation is found at Asn-370, Asn-375, and Asn-466. Fibronectin type-III domains follow at residues Pro-599–Ala-697, Thr-702–Glu-799, Pro-804–Pro-899, and Pro-900–Ser-995. Residues Pro-685 to Gly-710 form a disordered region. Over residues Arg-687 to Glu-696 the composition is skewed to basic and acidic residues. Residues Asn-705, Asn-764, Asn-858, Asn-893, Asn-911, Asn-929, and Asn-954 are each glycosylated (N-linked (GlcNAc...) asparagine). Ser-1000 carries the GPI-anchor amidated serine lipid modification. Residues Gly-1001 to Leu-1026 constitute a propeptide, removed in mature form.

Belongs to the immunoglobulin superfamily. Contactin family. As to quaternary structure, interacts with PTPRG. In terms of tissue distribution, specifically expressed in the nervous system. Not expressed in heart, spleen, lung, liver, kidney or skeletal muscle. In the hippocampus, it is highly expressed in CA1 pyramidal cells and weakly expressed in other regions of the hippocampus.

Its subcellular location is the cell membrane. It localises to the secreted. Contactins mediate cell surface interactions during nervous system development. Has some neurite outgrowth-promoting activity. May be involved in synaptogenesis. The polypeptide is Contactin-4 (Cntn4) (Rattus norvegicus (Rat)).